A 268-amino-acid polypeptide reads, in one-letter code: Shikimate dehydrogenase (NADP(+)) (268 aa).

Shikimate contacts are provided by residues 14–16 (SKS) and threonine 61. The Proton acceptor role is filled by lysine 65. Shikimate-binding residues include asparagine 86 and aspartate 102. NADP(+) is bound by residues 126–130 (GAGGA), 149–154 (NRTFLK), and methionine 213. Shikimate is bound at residue tyrosine 215. Glycine 238 lines the NADP(+) pocket.

It belongs to the shikimate dehydrogenase family. Homodimer.

The catalysed reaction is shikimate + NADP(+) = 3-dehydroshikimate + NADPH + H(+). It participates in metabolic intermediate biosynthesis; chorismate biosynthesis; chorismate from D-erythrose 4-phosphate and phosphoenolpyruvate: step 4/7. Functionally, involved in the biosynthesis of the chorismate, which leads to the biosynthesis of aromatic amino acids. Catalyzes the reversible NADPH linked reduction of 3-dehydroshikimate (DHSA) to yield shikimate (SA). This is Shikimate dehydrogenase (NADP(+)) from Haemophilus influenzae (strain PittGG).